The following is a 273-amino-acid chain: Phosphatidylglycerol--prolipoprotein diacylglyceryl transferase (273 aa).

Transmembrane regions (helical) follow at residues 21–41 (VSIR…LWLA), 60–80 (LLFA…VIFY), 95–115 (VWTG…AMFW), 124–144 (FFGV…MGRM), 176–196 (SQLY…NWFI), 203–223 (GSVS…VEFV), and 237–257 (ISMG…MMVW). Arg-143 lines the a 1,2-diacyl-sn-glycero-3-phospho-(1'-sn-glycerol) pocket.

This sequence belongs to the Lgt family.

The protein resides in the cell inner membrane. It catalyses the reaction L-cysteinyl-[prolipoprotein] + a 1,2-diacyl-sn-glycero-3-phospho-(1'-sn-glycerol) = an S-1,2-diacyl-sn-glyceryl-L-cysteinyl-[prolipoprotein] + sn-glycerol 1-phosphate + H(+). It functions in the pathway protein modification; lipoprotein biosynthesis (diacylglyceryl transfer). Functionally, catalyzes the transfer of the diacylglyceryl group from phosphatidylglycerol to the sulfhydryl group of the N-terminal cysteine of a prolipoprotein, the first step in the formation of mature lipoproteins. This Vibrio parahaemolyticus serotype O3:K6 (strain RIMD 2210633) protein is Phosphatidylglycerol--prolipoprotein diacylglyceryl transferase.